The sequence spans 85 residues: Small ribosomal subunit protein uS17 (85 aa).

This sequence belongs to the universal ribosomal protein uS17 family. In terms of assembly, part of the 30S ribosomal subunit.

In terms of biological role, one of the primary rRNA binding proteins, it binds specifically to the 5'-end of 16S ribosomal RNA. The polypeptide is Small ribosomal subunit protein uS17 (Desulforudis audaxviator (strain MP104C)).